A 715-amino-acid polypeptide reads, in one-letter code: Fatty acid oxidation complex subunit alpha (715 aa).

The enoyl-CoA hydratase stretch occupies residues 1 to 194 (MHEQRAKPSA…RLGLVDDAVP (194 aa)). The segment at 310 to 715 (HALHRIGILG…QGERFYPQGS (406 aa)) is 3-hydroxyacyl-CoA dehydrogenase.

The protein in the N-terminal section; belongs to the enoyl-CoA hydratase/isomerase family. In the central section; belongs to the 3-hydroxyacyl-CoA dehydrogenase family. As to quaternary structure, heterotetramer of two alpha chains (FadJ) and two beta chains (FadI).

The protein resides in the cytoplasm. The enzyme catalyses a (3S)-3-hydroxyacyl-CoA = a (2E)-enoyl-CoA + H2O. The catalysed reaction is a 4-saturated-(3S)-3-hydroxyacyl-CoA = a (3E)-enoyl-CoA + H2O. It carries out the reaction a (3S)-3-hydroxyacyl-CoA + NAD(+) = a 3-oxoacyl-CoA + NADH + H(+). It catalyses the reaction (3S)-3-hydroxybutanoyl-CoA = (3R)-3-hydroxybutanoyl-CoA. The protein operates within lipid metabolism; fatty acid beta-oxidation. Catalyzes the formation of a hydroxyacyl-CoA by addition of water on enoyl-CoA. Also exhibits 3-hydroxyacyl-CoA epimerase and 3-hydroxyacyl-CoA dehydrogenase activities. This chain is Fatty acid oxidation complex subunit alpha, found in Serratia proteamaculans (strain 568).